We begin with the raw amino-acid sequence, 1154 residues long: CRISPR-associated endoribonuclease Cas13a (1154 aa).

2 HEPN-like fold regions span residues 330–466 (TTSN…RFIN) and 923–1154 (FVHL…EMKK).

Belongs to the CRISPR-associated endoribonuclease Cas13a family. It depends on a divalent metal cation as a cofactor.

Its activity is regulated as follows. Target RNA acts as an activator for non-specific ssRNA degradation. Functionally, CRISPR (clustered regularly interspaced short palindromic repeat), is an adaptive immune system that provides protection against mobile genetic elements (viruses, transposable elements and conjugative plasmids). CRISPR clusters contain sequences complementary to antecedent mobile elements and target invading nucleic acids. Unlike many single-component effectors, this CRISPR-Cas system targets RNA. CRISPR clusters are transcribed from pre-CRISPR RNA (crRNA) and processed into crRNA by this protein. Cleaves linear target ssRNA in a pre-crRNA-dependent fashion, preferentially before U residues. Binding a viable target RNA target activates this protein for non-specific RNA degradation in vitro (called collateral RNA degradation), which is fairly sensitive as it requires picomolar levels of viable target RNA. This is CRISPR-associated endoribonuclease Cas13a from Paludibacter propionicigenes (strain DSM 17365 / JCM 13257 / WB4).